A 323-amino-acid chain; its full sequence is MDSKHQCVKLNDGHFMPVLGFGTYAPAEVPKNKAIEATKLAIEAGFRHIDSAHLYNNEEYVGLAIRSKIADGTVKREDIFYTSKLWCNSHRPEFVRPALERSLKNLQLDYVDLYLIHFPVSLKPGEELIPKDENGKLLFDTVDLCATWEAMEKCKDAGLAKSIGVSNFNRRQLEMILNKPGLKYKPVCNQVECHPYLNQRKLLDFCKSKDIVLVAYSALGSHREKPWVDQNSPVLLEDPVLCALAKKHKRTPALIALRYQLQRGVVVLAKSYNEQRIRENMKVFEFQLTSEDMKAIDGLDRNIRYLTLDIFAGPPNYPFSDEY.

Residues 20 to 24 and aspartate 50 each bind NADP(+); that span reads GFGTY. Tyrosine 24 is a binding site for substrate. Tyrosine 55 (proton donor) is an active-site residue. Substrate is bound at residue histidine 117. Residues 166–167, glutamine 190, and 216–222 each bind NADP(+); these read SN and YSALGSH. Substrate-binding residues include histidine 222 and tryptophan 227. NADP(+) is bound at residue 270 to 280; that stretch reads KSYNEQRIREN.

This sequence belongs to the aldo/keto reductase family. As to quaternary structure, monomer. As to expression, expressed in liver, adrenal gland, intestine and kidney.

The protein resides in the cytoplasm. It localises to the cytosol. The catalysed reaction is a 3alpha-hydroxysteroid + NADP(+) = a 3-oxosteroid + NADPH + H(+). The enzyme catalyses a 3alpha-hydroxysteroid + NAD(+) = a 3-oxosteroid + NADH + H(+). It catalyses the reaction (17R,20S)-17,20-dihydroxypregn-4-en-3-one + NADP(+) = 17alpha-hydroxyprogesterone + NADPH + H(+). It carries out the reaction (17R,20S)-17,20-dihydroxypregn-4-en-3-one + NAD(+) = 17alpha-hydroxyprogesterone + NADH + H(+). The catalysed reaction is (20S)-hydroxypregn-4-en-3-one + NADP(+) = progesterone + NADPH + H(+). The enzyme catalyses (20S)-hydroxypregn-4-en-3-one + NAD(+) = progesterone + NADH + H(+). It catalyses the reaction (1R,2R)-1,2-dihydrobenzene-1,2-diol + NADP(+) = catechol + NADPH + H(+). It carries out the reaction (S)-indan-1-ol + NAD(+) = indan-1-one + NADH + H(+). The catalysed reaction is (S)-indan-1-ol + NADP(+) = indan-1-one + NADPH + H(+). The enzyme catalyses 5alpha-androstane-3alpha,17beta-diol + NADP(+) = 17beta-hydroxy-5alpha-androstan-3-one + NADPH + H(+). It catalyses the reaction 5alpha-androstane-3beta,17beta-diol + NADP(+) = 17beta-hydroxy-5alpha-androstan-3-one + NADPH + H(+). It carries out the reaction 5alpha-androstane-3alpha,17beta-diol + NAD(+) = 17beta-hydroxy-5alpha-androstan-3-one + NADH + H(+). The catalysed reaction is 17beta-hydroxy-5alpha-androstan-3-one + NADP(+) = 5alpha-androstan-3,17-dione + NADPH + H(+). The enzyme catalyses androsterone + NADP(+) = 5alpha-androstan-3,17-dione + NADPH + H(+). It catalyses the reaction androsterone + NADPH + H(+) = 5alpha-androstane-3alpha,17beta-diol + NADP(+). It carries out the reaction 5alpha-androstane-3alpha,17beta-diol + NAD(+) = androsterone + NADH + H(+). The catalysed reaction is 17beta-estradiol + NADP(+) = estrone + NADPH + H(+). The enzyme catalyses 17beta-estradiol + NAD(+) = estrone + NADH + H(+). It catalyses the reaction testosterone + NADP(+) = androst-4-ene-3,17-dione + NADPH + H(+). It carries out the reaction 20alpha-hydroxy-5beta-pregnan-3-one + NADP(+) = 5beta-pregnan-3,20-dione + NADPH + H(+). The catalysed reaction is 3beta-hydroxy-5beta-pregnane-20-one + NADP(+) = 5beta-pregnan-3,20-dione + NADPH + H(+). The enzyme catalyses 3beta-hydroxy-5beta-pregnane-20-one + NADPH + H(+) = 3beta,20alpha-dihydroxy-5beta-pregnane + NADP(+). It catalyses the reaction (3beta,5alpha,17beta)-3-hydroxyandrostan-17-yl sulfate + NADP(+) = 5alpha-dihydrotestosterone sulfate + NADPH + H(+). It functions in the pathway steroid metabolism. Cytosolic aldo-keto reductase that catalyzes the NADH and NADPH-dependent reduction of ketosteroids to hydroxysteroids. Most probably acts as a reductase in vivo since the oxidase activity measured in vitro is inhibited by physiological concentrations of NADPH. Displays a broad positional specificity acting on positions 3, 17 and 20 of steroids and regulates the metabolism of hormones like estrogens and androgens. May also reduce conjugated steroids such as 5alpha-dihydrotestosterone sulfate. Displays affinity for bile acids. This chain is Aldo-keto reductase family 1 member C1 (AKR1C1), found in Macaca fuscata fuscata (Japanese macaque).